The sequence spans 285 residues: 33 kDa chaperonin (285 aa).

Intrachain disulfides connect Cys-228/Cys-230 and Cys-261/Cys-264.

This sequence belongs to the HSP33 family. Under oxidizing conditions two disulfide bonds are formed involving the reactive cysteines. Under reducing conditions zinc is bound to the reactive cysteines and the protein is inactive.

The protein resides in the cytoplasm. Redox regulated molecular chaperone. Protects both thermally unfolding and oxidatively damaged proteins from irreversible aggregation. Plays an important role in the bacterial defense system toward oxidative stress. The sequence is that of 33 kDa chaperonin from Hahella chejuensis (strain KCTC 2396).